Consider the following 281-residue polypeptide: Pantothenate synthetase (281 aa).

30–37 (MGYLHEGH) serves as a coordination point for ATP. Catalysis depends on His37, which acts as the Proton donor. Gln60 provides a ligand contact to (R)-pantoate. Residue Gln60 participates in beta-alanine binding. 146-149 (GEKD) contacts ATP. (R)-pantoate is bound at residue Gln152. Residues Ile175 and 183-186 (KSSR) each bind ATP.

The protein belongs to the pantothenate synthetase family. As to quaternary structure, homodimer.

It is found in the cytoplasm. It carries out the reaction (R)-pantoate + beta-alanine + ATP = (R)-pantothenate + AMP + diphosphate + H(+). The protein operates within cofactor biosynthesis; (R)-pantothenate biosynthesis; (R)-pantothenate from (R)-pantoate and beta-alanine: step 1/1. Functionally, catalyzes the condensation of pantoate with beta-alanine in an ATP-dependent reaction via a pantoyl-adenylate intermediate. The sequence is that of Pantothenate synthetase from Ruminiclostridium cellulolyticum (strain ATCC 35319 / DSM 5812 / JCM 6584 / H10) (Clostridium cellulolyticum).